The primary structure comprises 341 residues: tRNA N6-adenosine threonylcarbamoyltransferase (341 aa).

Residues His-113 and His-117 each contribute to the Fe cation site. Substrate contacts are provided by residues 136-140, Asp-169, Gly-182, and Asn-280; that span reads IISGG. Asp-308 serves as a coordination point for Fe cation.

It belongs to the KAE1 / TsaD family. Fe(2+) serves as cofactor.

It localises to the cytoplasm. The catalysed reaction is L-threonylcarbamoyladenylate + adenosine(37) in tRNA = N(6)-L-threonylcarbamoyladenosine(37) in tRNA + AMP + H(+). In terms of biological role, required for the formation of a threonylcarbamoyl group on adenosine at position 37 (t(6)A37) in tRNAs that read codons beginning with adenine. Is involved in the transfer of the threonylcarbamoyl moiety of threonylcarbamoyl-AMP (TC-AMP) to the N6 group of A37, together with TsaE and TsaB. TsaD likely plays a direct catalytic role in this reaction. The protein is tRNA N6-adenosine threonylcarbamoyltransferase of Anaplasma marginale (strain St. Maries).